A 601-amino-acid polypeptide reads, in one-letter code: Elongation factor 4 (601 aa).

Positions 7 to 189 constitute a tr-type G domain; sequence RNIRNFSIIA…AIVHRIPPPK (183 aa). GTP contacts are provided by residues 19–24 and 136–139; these read DHGKST and NKID.

The protein belongs to the TRAFAC class translation factor GTPase superfamily. Classic translation factor GTPase family. LepA subfamily.

It is found in the cell inner membrane. It catalyses the reaction GTP + H2O = GDP + phosphate + H(+). Its function is as follows. Required for accurate and efficient protein synthesis under certain stress conditions. May act as a fidelity factor of the translation reaction, by catalyzing a one-codon backward translocation of tRNAs on improperly translocated ribosomes. Back-translocation proceeds from a post-translocation (POST) complex to a pre-translocation (PRE) complex, thus giving elongation factor G a second chance to translocate the tRNAs correctly. Binds to ribosomes in a GTP-dependent manner. The sequence is that of Elongation factor 4 from Xanthomonas axonopodis pv. citri (strain 306).